A 95-amino-acid chain; its full sequence is Secreted RxLR effector protein 20 (95 aa).

The first 20 residues, 1 to 20 (MQSPYIILFALVTLLGSISG), serve as a signal peptide directing secretion. Residues 47 to 50 (RLLR) carry the RxLR motif.

Belongs to the RxLR effector family.

It is found in the secreted. The protein localises to the host nucleus. It localises to the host cytoplasm. Its function is as follows. Secreted effector that partially suppresses the host cell death induced by cell death-inducing proteins. The chain is Secreted RxLR effector protein 20 from Plasmopara viticola (Downy mildew of grapevine).